A 427-amino-acid chain; its full sequence is L-rhamnose isomerase (427 aa).

H264, D296, and D298 together coordinate Mn(2+).

The protein belongs to the rhamnose isomerase family. The cofactor is Mn(2+).

The protein localises to the cytoplasm. The catalysed reaction is L-rhamnopyranose = L-rhamnulose. The protein operates within carbohydrate degradation; L-rhamnose degradation; glycerone phosphate from L-rhamnose: step 1/3. Catalyzes the interconversion of L-rhamnose and L-rhamnulose. The sequence is that of L-rhamnose isomerase from Lactiplantibacillus plantarum (strain ATCC BAA-793 / NCIMB 8826 / WCFS1) (Lactobacillus plantarum).